A 639-amino-acid chain; its full sequence is Probable endo-1,3(4)-beta-glucanase ACLA_073210 (639 aa).

Residues 1–21 (MAPSSLLLSVGSLIASSLASA) form the signal peptide. Residues 26–290 (IREQSQSYQL…WAGNVFGESG (265 aa)) enclose the GH16 domain. The N-linked (GlcNAc...) asparagine glycan is linked to asparagine 65. Glutamate 146 acts as the Nucleophile in catalysis. Residue glutamate 151 is the Proton donor of the active site. Disordered regions lie at residues 337–384 (TVAS…TVAE) and 442–545 (QSSS…GSSI). The span at 339–348 (ASPNTASEVH) shows a compositional bias: polar residues. Composition is skewed to low complexity over residues 362–376 (PTVPTAAETTVVPPA) and 478–488 (TTTEAVAETET). Residue alanine 617 is the site of GPI-anchor amidated alanine attachment. Residues 618 to 639 (GARKLSVGLSGLVGALAVAALA) constitute a propeptide, removed in mature form.

It belongs to the glycosyl hydrolase 16 family.

The protein localises to the cell membrane. The enzyme catalyses Endohydrolysis of (1-&gt;3)- or (1-&gt;4)-linkages in beta-D-glucans when the glucose residue whose reducing group is involved in the linkage to be hydrolyzed is itself substituted at C-3.. Mixed-linked glucanase involved in the degradation of complex natural cellulosic substrates. In Aspergillus clavatus (strain ATCC 1007 / CBS 513.65 / DSM 816 / NCTC 3887 / NRRL 1 / QM 1276 / 107), this protein is Probable endo-1,3(4)-beta-glucanase ACLA_073210.